The following is a 306-amino-acid chain: Methionyl-tRNA formyltransferase (306 aa).

110-113 provides a ligand contact to (6S)-5,6,7,8-tetrahydrofolate; sequence SLLP.

It belongs to the Fmt family.

It catalyses the reaction L-methionyl-tRNA(fMet) + (6R)-10-formyltetrahydrofolate = N-formyl-L-methionyl-tRNA(fMet) + (6S)-5,6,7,8-tetrahydrofolate + H(+). Attaches a formyl group to the free amino group of methionyl-tRNA(fMet). The formyl group appears to play a dual role in the initiator identity of N-formylmethionyl-tRNA by promoting its recognition by IF2 and preventing the misappropriation of this tRNA by the elongation apparatus. The protein is Methionyl-tRNA formyltransferase of Brucella abortus (strain S19).